Reading from the N-terminus, the 216-residue chain is U1 small nuclear ribonucleoprotein C (216 aa).

A Matrin-type zinc finger spans residues 4–36 (FFCDYCDVYLTHDSMSVRKAHNSGRNHLRNVVD). 2 disordered regions span residues 70-89 (PQNQ…PGAG) and 125-216 (PGGI…ADKR). Pro residues-rich tracts occupy residues 140 to 149 (PPMPPFPGMP) and 157 to 204 (GVPP…PPFG).

This sequence belongs to the U1 small nuclear ribonucleoprotein C family. In terms of assembly, U1 snRNP is composed of the 7 core Sm proteins B/B', D1, D2, D3, E, F and G that assemble in a heptameric protein ring on the Sm site of the small nuclear RNA to form the core snRNP, and at least 3 U1 snRNP-specific proteins U1-70K, U1-A and U1-C. U1-C interacts with U1 snRNA and the 5' splice-site region of the pre-mRNA.

Its subcellular location is the nucleus. Functionally, component of the spliceosomal U1 snRNP, which is essential for recognition of the pre-mRNA 5' splice-site and the subsequent assembly of the spliceosome. U1-C is directly involved in initial 5' splice-site recognition for both constitutive and regulated alternative splicing. The interaction with the 5' splice-site seems to precede base-pairing between the pre-mRNA and the U1 snRNA. Stimulates commitment or early (E) complex formation by stabilizing the base pairing of the 5' end of the U1 snRNA and the 5' splice-site region. The chain is U1 small nuclear ribonucleoprotein C from Neurospora crassa (strain ATCC 24698 / 74-OR23-1A / CBS 708.71 / DSM 1257 / FGSC 987).